Reading from the N-terminus, the 574-residue chain is DNA polymerase alpha subunit B (574 aa).

Belongs to the DNA polymerase alpha subunit B family. Component of the alpha DNA polymerase complex (also known as the alpha DNA polymerase-primase complex) consisting of four subunits: the catalytic subunit pol1, the accessory subunit spb70/pol12, and the primase complex subunits spp1/pri1 and spp2/pri2 respectively. Interacts with orc1. Interacts with orc2; the interaction occurs on the chromatin, is stable thoughout the cell cycle and is independent from spb70 role in the alpha DNA polymerase complex. Post-translationally, phosphorylated in a cell cycle-dependent manner.

It localises to the nucleus. Its subcellular location is the chromosome. Its function is as follows. Accessory subunit of the DNA polymerase alpha complex (also known as the alpha DNA polymerase-primase complex) which plays an essential role in the initiation of DNA synthesis. During the S phase of the cell cycle, the DNA polymerase alpha complex (composed of a catalytic subunit pol1, an accessory subunit spb70/pol12 and two primase subunits, the catalytic subunit spp1/pri1 and the regulatory subunit spp2/pri2) is recruited to DNA at the replicative forks. The primase subunit of the polymerase alpha complex initiates DNA synthesis by oligomerising short RNA primers on both leading and lagging strands. This chain is DNA polymerase alpha subunit B, found in Schizosaccharomyces pombe (strain 972 / ATCC 24843) (Fission yeast).